The sequence spans 74 residues: Protein sok (74 aa).

The disordered stretch occupies residues 26–45 (TQHGNKPPSRHEAESLKRRA).

This chain is Protein sok (sok), found in Escherichia coli.